Here is a 457-residue protein sequence, read N- to C-terminus: Putative F-box protein At3g58860 (457 aa).

The F-box domain maps to 6–54 (MDLFSKLPDEVISHILSSLPTKEAASTSVLAKKWRYLFAFVPSLDFNDS).

The polypeptide is Putative F-box protein At3g58860 (Arabidopsis thaliana (Mouse-ear cress)).